Here is a 220-residue protein sequence, read N- to C-terminus: Ribosome assembly protein 3 (220 aa).

The tract at residues 1–91 (MSAGDISAIN…VSDVELTDEE (91 aa)) is disordered. Over residues 13–24 (SVKKNRRRKKRR) the composition is skewed to basic residues. Positions 29-39 (SSSDSSSSDPS) are enriched in low complexity. Over residues 41–72 (ESEKEEIQNGAIEEHVGENGKSDHVFSKGNDE) the composition is skewed to basic and acidic residues. Positions 73-91 (DKQEDIAIEVSDVELTDEE) are enriched in acidic residues. S83 bears the Phosphoserine mark. Position 88 is a phosphothreonine (T88). S99 carries the post-translational modification Phosphoserine.

This sequence belongs to the RSA3 family. Associates with nucleolar pre-ribosomal particles. Interacts with DBP6. Together with DBP6, NOP8, URB1 and URB2, forms an RNA-independent complex, which is required during early maturation of nascent 60S ribosomal subunits.

Its subcellular location is the nucleus. The protein resides in the nucleolus. Required for efficient biogenesis of the 60S ribosomal subunit. The chain is Ribosome assembly protein 3 (RSA3) from Saccharomyces cerevisiae (strain ATCC 204508 / S288c) (Baker's yeast).